Reading from the N-terminus, the 147-residue chain is Myosin-2 essential light chain (147 aa).

EF-hand domains lie at 7-42 (DQLAEFQEAFNLFDNRGDGKIQLSQVGECLRALGQN), 80-115 (DTADDFIEGLRHFDKDASGYISSAELRHLLTTLGEK), and 115-147 (KLTDEEVEQLLANMEDQQGNINYEEFVRMVMSG). Ser-30 carries the phosphoserine modification. 5 residues coordinate Ca(2+): Asp-93, Asp-95, Ser-97, Tyr-99, and Glu-104.

As to quaternary structure, myosin is a hexamer of 2 heavy chains and 4 light chains.

The polypeptide is Myosin-2 essential light chain (Mlc-c) (Drosophila melanogaster (Fruit fly)).